The chain runs to 107 residues: Thioredoxin-1 (107 aa).

In terms of domain architecture, Thioredoxin spans 2-106; that stretch reads ASVRTMTDFH…LTNMMAKLVK (105 aa). Catalysis depends on nucleophile residues cysteine 31 and cysteine 34. Cysteine 31 and cysteine 34 are joined by a disulfide.

Belongs to the thioredoxin family.

It localises to the nucleus. Participates in various redox reactions through the reversible oxidation of its active center dithiol to a disulfide and catalyzes dithiol-disulfide exchange reactions. As a reducing substrate of peroxiredoxin 1, thioredoxin 2 is preferred over thioredoxin 1. Required for female meiosis and early embryonic development. This is Thioredoxin-1 (dhd) from Drosophila yakuba (Fruit fly).